We begin with the raw amino-acid sequence, 214 residues long: Galactokinase (214 aa).

Alpha-D-galactose is bound by residues arginine 47, aspartate 53, histidine 54, and aspartate 56. Residues glycine 149, glycine 151, serine 153, and serine 154 each contribute to the ATP site. Alpha-D-galactose is bound at residue aspartate 199. The active-site Proton acceptor is aspartate 199.

It belongs to the GHMP kinase family. GalK subfamily.

The enzyme catalyses alpha-D-galactose + ATP = alpha-D-galactose 1-phosphate + ADP + H(+). The protein operates within carbohydrate metabolism; galactose metabolism. Galactokinase is a key enzyme in the galactose metabolism where it catalyzes the conversion of alpha-D-galactose to galactose 1-phosphate. Can also induce the transcription of the gal genes in response to the organism being challenged with galactose as the sole source of carbon. This is Galactokinase from Candida maltosa (Yeast).